The primary structure comprises 186 residues: Glutathione S-transferase 1, isoform A (186 aa).

A GST N-terminal domain is found at 1 to 81 (MDFYYLPGSA…YLVEKYCAHD (81 aa)). Glutathione is bound by residues Ser9, 50-52 (HCI), and 65-67 (ESR). Positions 92 to 186 (DPRRRAVVHQ…RRCRVRSAAI (95 aa)) constitute a GST C-terminal domain.

This sequence belongs to the GST superfamily. Theta family. In terms of assembly, homodimer.

The enzyme catalyses RX + glutathione = an S-substituted glutathione + a halide anion + H(+). Functionally, conjugation of reduced glutathione to a wide number of exogenous and endogenous hydrophobic electrophiles. This chain is Glutathione S-transferase 1, isoform A, found in Anopheles gambiae (African malaria mosquito).